A 476-amino-acid chain; its full sequence is ATP synthase subunit beta (476 aa).

Residue 154–161 participates in ATP binding; the sequence is GGAGVGKT.

The protein belongs to the ATPase alpha/beta chains family. In terms of assembly, F-type ATPases have 2 components, CF(1) - the catalytic core - and CF(0) - the membrane proton channel. CF(1) has five subunits: alpha(3), beta(3), gamma(1), delta(1), epsilon(1). CF(0) has three main subunits: a(1), b(2) and c(9-12). The alpha and beta chains form an alternating ring which encloses part of the gamma chain. CF(1) is attached to CF(0) by a central stalk formed by the gamma and epsilon chains, while a peripheral stalk is formed by the delta and b chains.

It is found in the cell inner membrane. The enzyme catalyses ATP + H2O + 4 H(+)(in) = ADP + phosphate + 5 H(+)(out). Its function is as follows. Produces ATP from ADP in the presence of a proton gradient across the membrane. The catalytic sites are hosted primarily by the beta subunits. This is ATP synthase subunit beta from Nitrobacter hamburgensis (strain DSM 10229 / NCIMB 13809 / X14).